A 514-amino-acid chain; its full sequence is Transmembrane protein 151B (514 aa).

The tract at residues 1-40 (MSAEGEPAEAVAETPANSPGEEAAAAAATTDVDVREEQRP) is disordered. 3 consecutive transmembrane segments (helical) span residues 57-77 (CLLL…CQVT), 104-124 (YVYI…VECW), and 286-306 (PWYV…SWPL).

The protein belongs to the TMEM151 family.

It localises to the membrane. This Xenopus tropicalis (Western clawed frog) protein is Transmembrane protein 151B (tmem151b).